Reading from the N-terminus, the 226-residue chain is Enolase-phosphatase E1 (226 aa).

It belongs to the HAD-like hydrolase superfamily. MasA/MtnC family. Monomer. It depends on Mg(2+) as a cofactor.

It carries out the reaction 5-methylsulfanyl-2,3-dioxopentyl phosphate + H2O = 1,2-dihydroxy-5-(methylsulfanyl)pent-1-en-3-one + phosphate. Its pathway is amino-acid biosynthesis; L-methionine biosynthesis via salvage pathway; L-methionine from S-methyl-5-thio-alpha-D-ribose 1-phosphate: step 3/6. The protein operates within amino-acid biosynthesis; L-methionine biosynthesis via salvage pathway; L-methionine from S-methyl-5-thio-alpha-D-ribose 1-phosphate: step 4/6. In terms of biological role, bifunctional enzyme that catalyzes the enolization of 2,3-diketo-5-methylthiopentyl-1-phosphate (DK-MTP-1-P) into the intermediate 2-hydroxy-3-keto-5-methylthiopentenyl-1-phosphate (HK-MTPenyl-1-P), which is then dephosphorylated to form the acireductone 1,2-dihydroxy-3-keto-5-methylthiopentene (DHK-MTPene). The protein is Enolase-phosphatase E1 of Shewanella pealeana (strain ATCC 700345 / ANG-SQ1).